Consider the following 226-residue polypeptide: Ribonuclease T (226 aa).

One can recognise an Exonuclease domain in the interval 20-194 (VVIDVETAGF…YDTERTAELF (175 aa)). 4 residues coordinate Mg(2+): Asp-23, Glu-25, His-181, and Asp-186. His-181 acts as the Proton donor/acceptor in catalysis.

Belongs to the RNase T family. As to quaternary structure, homodimer. The cofactor is Mg(2+).

Trims short 3' overhangs of a variety of RNA species, leaving a one or two nucleotide 3' overhang. Responsible for the end-turnover of tRNA: specifically removes the terminal AMP residue from uncharged tRNA (tRNA-C-C-A). Also appears to be involved in tRNA biosynthesis. The chain is Ribonuclease T from Shewanella denitrificans (strain OS217 / ATCC BAA-1090 / DSM 15013).